Here is a 293-residue protein sequence, read N- to C-terminus: Ribosomal protein L11 methyltransferase (293 aa).

S-adenosyl-L-methionine contacts are provided by threonine 145, glycine 166, aspartate 188, and asparagine 230.

This sequence belongs to the methyltransferase superfamily. PrmA family.

The protein resides in the cytoplasm. It carries out the reaction L-lysyl-[protein] + 3 S-adenosyl-L-methionine = N(6),N(6),N(6)-trimethyl-L-lysyl-[protein] + 3 S-adenosyl-L-homocysteine + 3 H(+). Methylates ribosomal protein L11. The chain is Ribosomal protein L11 methyltransferase from Escherichia coli O81 (strain ED1a).